The chain runs to 129 residues: uncharacterized protein (129 aa).

The N-terminal stretch at 1–21 (MAQNKTIAVALLLATLVAVMG) is a signal peptide.

This is an uncharacterized protein from Oryza sativa subsp. japonica (Rice).